Consider the following 549-residue polypeptide: ATP synthase subunit alpha (549 aa).

G172–T179 lines the ATP pocket.

The protein belongs to the ATPase alpha/beta chains family. F-type ATPases have 2 components, CF(1) - the catalytic core - and CF(0) - the membrane proton channel. CF(1) has five subunits: alpha(3), beta(3), gamma(1), delta(1), epsilon(1). CF(0) has three main subunits: a(1), b(2) and c(9-12). The alpha and beta chains form an alternating ring which encloses part of the gamma chain. CF(1) is attached to CF(0) by a central stalk formed by the gamma and epsilon chains, while a peripheral stalk is formed by the delta and b chains.

It is found in the cell membrane. It carries out the reaction ATP + H2O + 4 H(+)(in) = ADP + phosphate + 5 H(+)(out). Functionally, produces ATP from ADP in the presence of a proton gradient across the membrane. The alpha chain is a regulatory subunit. In Mycobacterium tuberculosis (strain CDC 1551 / Oshkosh), this protein is ATP synthase subunit alpha.